The primary structure comprises 589 residues: Kelch-like protein 25 (589 aa).

In terms of domain architecture, BTB spans 46 to 114 (TDVTLWAGNR…AYSSKIIINE (69 aa)). Residues 149–250 (CLGMMILSDA…LPSELLKEAV (102 aa)) form the BACK domain. Kelch repeat units follow at residues 296–340 (TLLI…AIGC), 341–388 (KVYV…ELEN), 389–444 (CLYV…SAKL), 446–492 (LFAF…VLGS), 493–538 (QIFI…ASGN), and 539–585 (KVYV…STWK).

Component of the BCR(KLHL25) E3 ubiquitin ligase complex, at least composed of cul3, klhl25 and rbx1.

Its pathway is protein modification; protein ubiquitination. Substrate-specific adapter of a BCR (BTB-CUL3-RBX1) E3 ubiquitin ligase complex involved in various processes, such as translation homeostasis and lipid synthesis. The BCR(KLHL25) ubiquitin ligase complex acts by mediating ubiquitination of hypophosphorylated eif4ebp1 (4E-BP1): ubiquitination and subsequent degradation of hypophosphorylated EIF4EBP1 (4E-BP1) probably serves as a homeostatic mechanism to maintain translation and prevent eIF4E inhibition when eIF4E levels are low. The BCR(KLHL25) complex also acts as a regulator of lipid synthesis by mediating ubiquitination and degradation of ACLY, thereby inhibiting lipid synthesis. The polypeptide is Kelch-like protein 25 (Xenopus tropicalis (Western clawed frog)).